We begin with the raw amino-acid sequence, 352 residues long: MQNRKIIHIDADCFYAAIEMRDDPNLRDIPMAIGGPASGRSVLSTANYAARVYGVRSAMPTSVAKRLCPALLVIPGNMNKYRLASEQMHAIFREFTDIIEPLSLDEAYLDVTNSSSFQGSATRIAEEIRSRILKEVGITVSAGVATNKFIAKVASDWDKPDGLTVVTPEKQFEFVSNVPVKFISGIGRVAQEKLASLGVFKCSDLQALDFSVLQKSFGSMSFRLSQFALGIDDRPVTVSRERKSISVEHTFSKDLLDLKECQAVLPILLTDLKKRMSGRDFESQLSKYYLKVKFDDFKQTTIEQPIKAKLSDDVFSQLLQQAYSRSRRPVRLIGVGYRLSPPELHQLNLPFV.

Positions Ile6–Gly187 constitute a UmuC domain. Mg(2+)-binding residues include Asp10 and Asp105. Glu106 is a catalytic residue.

This sequence belongs to the DNA polymerase type-Y family. In terms of assembly, monomer. Mg(2+) serves as cofactor.

The protein localises to the cytoplasm. It catalyses the reaction DNA(n) + a 2'-deoxyribonucleoside 5'-triphosphate = DNA(n+1) + diphosphate. In terms of biological role, poorly processive, error-prone DNA polymerase involved in untargeted mutagenesis. Copies undamaged DNA at stalled replication forks, which arise in vivo from mismatched or misaligned primer ends. These misaligned primers can be extended by PolIV. Exhibits no 3'-5' exonuclease (proofreading) activity. May be involved in translesional synthesis, in conjunction with the beta clamp from PolIII. The protein is DNA polymerase IV of Marinomonas sp. (strain MWYL1).